The following is a 295-amino-acid chain: Acetylglutamate kinase (295 aa).

Substrate contacts are provided by residues 70–71, arginine 92, and asparagine 191; that span reads GG.

Belongs to the acetylglutamate kinase family. ArgB subfamily.

The protein resides in the cytoplasm. The catalysed reaction is N-acetyl-L-glutamate + ATP = N-acetyl-L-glutamyl 5-phosphate + ADP. It functions in the pathway amino-acid biosynthesis; L-arginine biosynthesis; N(2)-acetyl-L-ornithine from L-glutamate: step 2/4. Its function is as follows. Catalyzes the ATP-dependent phosphorylation of N-acetyl-L-glutamate. This chain is Acetylglutamate kinase, found in Mycobacterium avium (strain 104).